The primary structure comprises 319 residues: MAIKRTKAEKKVAYDKKLCQLLDEYTKVLIAVADNVGSNQLQEIRKGLRGDSIVLMGKNTLIRRCIKVHADNTGNKEFLELMPLLVGNVGLIFTKGDLKEVREEVAKYKVGAPARVGLVAPVDVVVPPGNTGLDPSQTSFFQVLNIPTKINKGTVEIITPVELIKKGDKVGSSESALLAKLGIRPFSYGLVITNVYDSGSVFSPEVLDLTEDDLMEKFASGVSMVASVSLAISYPTIAAAPHMFLNGYKNVLAVAVETEYSYPHADKIKEYLKDPSKFAVAAPVAADSGAAAPSAAKEEEKKEEPEEESDGDLGMSLFD.

Residues 286–295 (ADSGAAAPSA) are compositionally biased toward low complexity. The tract at residues 286-319 (ADSGAAAPSAAKEEEKKEEPEEESDGDLGMSLFD) is disordered.

The protein belongs to the universal ribosomal protein uL10 family. As to quaternary structure, P0 forms a pentameric complex by interaction with dimers of P1 and P2. Interacts with NSF. Phosphorylated. In terms of tissue distribution, highly expressed in stems, inflorescences and immature seeds (at protein level). Expressed in leaves and mature seeds (at protein level).

Functionally, ribosomal protein P0 is the functional equivalent of E.coli protein L10. In Oryza sativa subsp. japonica (Rice), this protein is Large ribosomal subunit protein uL10.